Reading from the N-terminus, the 509-residue chain is Aspartyl/glutamyl-tRNA(Asn/Gln) amidotransferase subunit B (509 aa).

Belongs to the GatB/GatE family. GatB subfamily. In terms of assembly, heterotrimer of A, B and C subunits.

It catalyses the reaction L-glutamyl-tRNA(Gln) + L-glutamine + ATP + H2O = L-glutaminyl-tRNA(Gln) + L-glutamate + ADP + phosphate + H(+). It carries out the reaction L-aspartyl-tRNA(Asn) + L-glutamine + ATP + H2O = L-asparaginyl-tRNA(Asn) + L-glutamate + ADP + phosphate + 2 H(+). Its function is as follows. Allows the formation of correctly charged Asn-tRNA(Asn) or Gln-tRNA(Gln) through the transamidation of misacylated Asp-tRNA(Asn) or Glu-tRNA(Gln) in organisms which lack either or both of asparaginyl-tRNA or glutaminyl-tRNA synthetases. The reaction takes place in the presence of glutamine and ATP through an activated phospho-Asp-tRNA(Asn) or phospho-Glu-tRNA(Gln). The chain is Aspartyl/glutamyl-tRNA(Asn/Gln) amidotransferase subunit B from Psychrobacter arcticus (strain DSM 17307 / VKM B-2377 / 273-4).